Here is a 918-residue protein sequence, read N- to C-terminus: Sarcosine dehydrogenase, mitochondrial (918 aa).

Over residues 1–13 the composition is skewed to low complexity; sequence MASLSRALRVAAA. The transit peptide at 1-22 directs the protein to the mitochondrion; sequence MASLSRALRVAAAHPRQSPTRG. The disordered stretch occupies residues 1–40; the sequence is MASLSRALRVAAAHPRQSPTRGMGPCNLSSAAGPTAEKSV. At K38 the chain carries N6-succinyllysine. H108 is modified (tele-8alpha-FAD histidine). Position 173 is an N6-acetyllysine; alternate (K173). K173 carries the post-translational modification N6-succinyllysine; alternate. Residues K377 and K391 each carry the N6-succinyllysine modification. An N6-acetyllysine mark is found at K559 and K775. Y777 is modified (phosphotyrosine). An N6-acetyllysine; alternate mark is found at K802, K884, and K904. N6-succinyllysine; alternate occurs at positions 802, 884, and 904.

It belongs to the GcvT family. It depends on FAD as a cofactor. In terms of tissue distribution, expressed in pancreas, liver and kidney.

The protein resides in the mitochondrion matrix. The enzyme catalyses (6S)-5,6,7,8-tetrahydrofolyl-(gamma-L-Glu)(n) + sarcosine + oxidized [electron-transfer flavoprotein] + H(+) = (6R)-5,10-methylenetetrahydrofolyl-(gamma-L-Glu)(n) + reduced [electron-transfer flavoprotein] + glycine. Its pathway is amine and polyamine degradation; sarcosine degradation; formaldehyde and glycine from sarcosine: step 1/1. Catalyzes the last step of the oxidative degradation of choline to glycine. Converts sarcosine into glycine. The sequence is that of Sarcosine dehydrogenase, mitochondrial from Homo sapiens (Human).